We begin with the raw amino-acid sequence, 187 residues long: RNA 2',3'-cyclic phosphodiesterase (187 aa).

The active-site Proton donor is H40. 2 consecutive short sequence motifs (HXTX) follow at residues 40–43 (HLTL) and 125–128 (HITI). Residue H125 is the Proton acceptor of the active site.

Belongs to the 2H phosphoesterase superfamily. ThpR family.

The enzyme catalyses a 3'-end 2',3'-cyclophospho-ribonucleotide-RNA + H2O = a 3'-end 2'-phospho-ribonucleotide-RNA + H(+). Its function is as follows. Hydrolyzes RNA 2',3'-cyclic phosphodiester to an RNA 2'-phosphomonoester. This is RNA 2',3'-cyclic phosphodiesterase from Thermotoga maritima (strain ATCC 43589 / DSM 3109 / JCM 10099 / NBRC 100826 / MSB8).